The following is a 600-amino-acid chain: UvrABC system protein C (600 aa).

In terms of domain architecture, GIY-YIG spans 15–92; that stretch reads EKAGCYLMKD…IKKYQPYYNV (78 aa). The region spanning 197 to 232 is the UVR domain; it reads QEVKKDLTNKMLQASADLEFERAGELRDQLKYIEET.

It belongs to the UvrC family. Interacts with UvrB in an incision complex.

The protein resides in the cytoplasm. In terms of biological role, the UvrABC repair system catalyzes the recognition and processing of DNA lesions. UvrC both incises the 5' and 3' sides of the lesion. The N-terminal half is responsible for the 3' incision and the C-terminal half is responsible for the 5' incision. The polypeptide is UvrABC system protein C (Lactobacillus delbrueckii subsp. bulgaricus (strain ATCC BAA-365 / Lb-18)).